The sequence spans 370 residues: A-type ATP synthase subunit C (370 aa).

This sequence belongs to the V-ATPase V0D/AC39 subunit family. Has multiple subunits with at least A(3), B(3), C, D, E, F, H, I and proteolipid K(x).

The protein resides in the cell membrane. Functionally, component of the A-type ATP synthase that produces ATP from ADP in the presence of a proton gradient across the membrane. The sequence is that of A-type ATP synthase subunit C from Pyrococcus furiosus (strain ATCC 43587 / DSM 3638 / JCM 8422 / Vc1).